Reading from the N-terminus, the 211-residue chain is Thymidylate kinase (211 aa).

10–17 (GPDGAGKT) is an ATP binding site.

The protein belongs to the thymidylate kinase family.

The catalysed reaction is dTMP + ATP = dTDP + ADP. Phosphorylation of dTMP to form dTDP in both de novo and salvage pathways of dTTP synthesis. This Lactococcus lactis subsp. cremoris (strain MG1363) protein is Thymidylate kinase.